The chain runs to 743 residues: Keratin, type I cytoskeletal 9 (743 aa).

The segment covering 1–16 has biased composition (low complexity); it reads MSCRQSSSSFWSSSSS. The segment at 1 to 46 is disordered; it reads MSCRQSSSSFWSSSSSCGGGGGRGGSGGSMRSSFSRSSRAGGGGGG. The tract at residues 1–130 is head; the sequence is MSCRQSSSSF…GGEGGILNTN (130 aa). 2 positions are modified to phosphoserine: Ser14 and Ser16. A compositionally biased stretch (gly residues) spans 17–28; the sequence is CGGGGGRGGSGG. Low complexity predominate over residues 29–39; it reads SMRSSFSRSSR. Residues Ser55 and Ser155 each carry the phosphoserine modification. The interval 131-166 is coil 1A; the sequence is EKIVMQNLNSRLASYMEKVLELEESNTAMEKQIQDW. The region spanning 131-443 is the IF rod domain; the sequence is EKIVMQNLNS…ELLEGGQQDF (313 aa). Positions 167 to 185 are linker 1; that stretch reads YSKRGPKVFQKDNTHYYDT. The interval 186 to 277 is coil 1B; it reads IEDLKDRIVD…KNHKEEMSQL (92 aa). Residues 278-300 form a linker 12 region; that stretch reads TGQNDGDVNVEINVAPSTDLTRV. Positions 301–439 are coil 2; it reads LNDMREEYEQ…ETYRELLEGG (139 aa). 2 disordered regions span residues 440-468 and 501-743; these read QQDF…GSYG and GGSG…KMRY. Residues 440–709 are tail; that stretch reads QQDFESSGAG…GGGSGSGGGS (270 aa). Composition is skewed to gly residues over residues 449–468 and 501–717; these read GQIG…GSYG and GGSG…GGGN.

Belongs to the intermediate filament family. Heterotetramer of two type I and two type II keratins. As to expression, expressed in footpad epidermis and testis (at protein level).

Functionally, may serve an important special function either in the mature palmar and plantar skin tissue or in the morphogenetic program of the formation of these tissues. Plays a role in keratin filament assembly. Plays an essential role in the correct development of sperm. This chain is Keratin, type I cytoskeletal 9, found in Mus musculus (Mouse).